A 240-amino-acid chain; its full sequence is Transcription factor bHLH101 (240 aa).

The bHLH domain occupies 65–117; that stretch reads EKKLNHNASERDRRRKLNALYSSLRALLPLSDQKRKLSIPMTVARVVKYIPEQ.

As to quaternary structure, homodimer. In terms of tissue distribution, flowers.

It is found in the nucleus. This Arabidopsis thaliana (Mouse-ear cress) protein is Transcription factor bHLH101 (BHLH101).